Reading from the N-terminus, the 119-residue chain is Large ribosomal subunit protein uL18 (119 aa).

The disordered stretch occupies residues 1–25 (MITKIDKNKVRKKRHARVRSKISGT). Residues 9–20 (KVRKKRHARVRS) show a composition bias toward basic residues.

This sequence belongs to the universal ribosomal protein uL18 family. Part of the 50S ribosomal subunit; part of the 5S rRNA/L5/L18/L25 subcomplex. Contacts the 5S and 23S rRNAs.

Functionally, this is one of the proteins that bind and probably mediate the attachment of the 5S RNA into the large ribosomal subunit, where it forms part of the central protuberance. This is Large ribosomal subunit protein uL18 from Listeria monocytogenes serotype 4b (strain CLIP80459).